The chain runs to 503 residues: Maturase K (503 aa).

Belongs to the intron maturase 2 family. MatK subfamily.

The protein localises to the plastid. Its subcellular location is the chloroplast. Functionally, usually encoded in the trnK tRNA gene intron. Probably assists in splicing its own and other chloroplast group II introns. In Backhousia myrtifolia (Grey myrtle), this protein is Maturase K.